Consider the following 492-residue polypeptide: Glutamyl-tRNA(Gln) amidotransferase subunit A (492 aa).

Active-site charge relay system residues include Lys78 and Ser158. Ser182 (acyl-ester intermediate) is an active-site residue.

The protein belongs to the amidase family. GatA subfamily. In terms of assembly, heterotrimer of A, B and C subunits.

It carries out the reaction L-glutamyl-tRNA(Gln) + L-glutamine + ATP + H2O = L-glutaminyl-tRNA(Gln) + L-glutamate + ADP + phosphate + H(+). In terms of biological role, allows the formation of correctly charged Gln-tRNA(Gln) through the transamidation of misacylated Glu-tRNA(Gln) in organisms which lack glutaminyl-tRNA synthetase. The reaction takes place in the presence of glutamine and ATP through an activated gamma-phospho-Glu-tRNA(Gln). The polypeptide is Glutamyl-tRNA(Gln) amidotransferase subunit A (Rhodopseudomonas palustris (strain BisA53)).